A 352-amino-acid chain; its full sequence is C-C chemokine receptor type 5 (352 aa).

Residues 1-30 (MDYQVSSPTYDIDYYTSEPCQKVNVKQIAA) are Extracellular-facing. Tyrosine 3 is subject to Sulfotyrosine. 2 O-linked (GalNAc...) serine glycosylation sites follow: serine 6 and serine 7. Residues tyrosine 10, tyrosine 14, and tyrosine 15 each carry the sulfotyrosine modification. Intrachain disulfides connect cysteine 20-cysteine 269 and cysteine 101-cysteine 178. The chain crosses the membrane as a helical span at residues 31–58 (RLLPPLYSLVFIFGFVGNILVVLILINC). Residues 59-68 (KRLKSMTDIY) lie on the Cytoplasmic side of the membrane. Residues 69 to 89 (LLNLAISDLFFLLTVPFWAHY) traverse the membrane as a helical segment. The Extracellular segment spans residues 90-102 (AAAQWDFGNTMCQ). Residues 103–124 (LLTGLYFIGFFSGIFFIILLTI) form a helical membrane-spanning segment. Topologically, residues 125–141 (DRYLAIVHAVFALKART) are cytoplasmic. Residues 142 to 166 (VTFGVVTSVITWVVAVFASLPGIIF) traverse the membrane as a helical segment. At 167-198 (TRSQREGLHYTCSSHFPYSQYQFWKNFQTLKI) the chain is on the extracellular side. The chain crosses the membrane as a helical span at residues 199-218 (VILGLVLPLLVMVICYSGIL). Over 219 to 235 (KTLLRCRNEKKRHRAVR) the chain is Cytoplasmic. Residues 236-260 (LIFTIMIVYFLFWAPYNIVLLLNTF) form a helical membrane-spanning segment. Residues 261–277 (QEFFGLNNCSSSNRLDQ) lie on the Extracellular side of the membrane. A helical transmembrane segment spans residues 278 to 301 (AMQVTETLGMTHCCINPIIYAFVG). Topologically, residues 302-352 (EKFRNYLLVFFQKHIAKRFCKCCYIFQQEAPERASSVYTRSTGEQEISVGL) are cytoplasmic. S-palmitoyl cysteine attachment occurs at residues cysteine 321, cysteine 323, and cysteine 324. Serine 336, serine 337, serine 342, and serine 349 each carry phosphoserine; by BARK1.

Belongs to the G-protein coupled receptor 1 family. Interacts with PRAF2. Efficient ligand binding to CCL3/MIP-1alpha and CCL4/MIP-1beta requires sulfation, O-glycosylation and sialic acid modifications. Glycosylation on Ser-6 is required for efficient binding of CCL4. Interacts with GRK2. Interacts with ARRB1 and ARRB2. Interacts with CNIH4. Interacts with S100A4; this interaction stimulates T-lymphocyte chemotaxis. Sulfated on at least 2 of the N-terminal tyrosines. Sulfation is required for efficient binding of the chemokines, CCL3 and CCL4. In terms of processing, palmitoylation in the C-terminal is important for cell surface expression. Post-translationally, phosphorylation on serine residues in the C-terminal is stimulated by binding CC chemokines especially by APO-RANTES. O-glycosylated, but not N-glycosylated. Ser-6 appears to be the major site even if Ser-7 may be also O-glycosylated. Also sialylated glycans present which contribute to chemokine binding. Thr-16 and Ser-17 may also be glycosylated and, if so, with small moieties such as a T-antigen.

The protein resides in the cell membrane. Receptor for a number of inflammatory CC-chemokines including CCL3/MIP-1-alpha, CCL4/MIP-1-beta and RANTES and subsequently transduces a signal by increasing the intracellular calcium ion level. May play a role in the control of granulocytic lineage proliferation or differentiation. Participates in T-lymphocyte migration to the infection site by acting as a chemotactic receptor. In Rhinopithecus bieti (Black snub-nosed monkey), this protein is C-C chemokine receptor type 5 (CCR5).